A 627-amino-acid polypeptide reads, in one-letter code: Carene synthase, chloroplastic (627 aa).

A chloroplast-targeting transit peptide spans 1-36; that stretch reads MSVISIMPLASKPCLNKSFISSTHEPKALRRPISTV. Residues D378, D382, and D530 each contribute to the Mg(2+) site. Positions 378 to 382 match the DDXXD motif motif; that stretch reads DDMYD.

This sequence belongs to the terpene synthase family. Tpsd subfamily. Mg(2+) serves as cofactor. Requires Mn(2+) as cofactor.

The protein resides in the plastid. The protein localises to the chloroplast. It carries out the reaction (2E)-geranyl diphosphate = (+)-car-3-ene + diphosphate. It participates in terpene metabolism; oleoresin biosynthesis. Terpene synthase (TPS) involved in defensive oleoresin formation in conifers in response to insect attack or other injury. The chain is Carene synthase, chloroplastic (3CAR) from Picea glauca (White spruce).